Here is a 440-residue protein sequence, read N- to C-terminus: Gamma-aminobutyric acid receptor subunit pi (440 aa).

A signal peptide spans methionine 1–glycine 23. Over asparagine 24–asparagine 241 the chain is Extracellular. Residues asparagine 43, asparagine 102, and asparagine 145 are each glycosylated (N-linked (GlcNAc...) asparagine). The cysteines at positions 160 and 174 are disulfide-linked. Residues asparagine 196 and asparagine 228 are each glycosylated (N-linked (GlcNAc...) asparagine). A helical membrane pass occupies residues valine 242–valine 262. Residues serine 263 to serine 270 are Cytoplasmic-facing. The helical transmembrane segment at valine 271 to isoleucine 290 threads the bilayer. Topologically, residues glycine 291–cysteine 301 are extracellular. A helical transmembrane segment spans residues phenylalanine 302–leucine 322. The Cytoplasmic segment spans residues glutamate 323–lysine 419. Residues leucine 420–phenylalanine 440 traverse the membrane as a helical segment.

Belongs to the ligand-gated ion channel (TC 1.A.9) family. Gamma-aminobutyric acid receptor (TC 1.A.9.5) subfamily. GABRP sub-subfamily. As to quaternary structure, heteropentamer, formed by a combination of alpha (GABRA1-6), beta (GABRB1-3), gamma (GABRG1-3), delta (GABRD), epsilon (GABRE), rho (GABRR1-3), pi (GABRP) and theta (GABRQ) chains, each subunit exhibiting distinct physiological and pharmacological properties.

The protein localises to the cell membrane. It localises to the apical cell membrane. The catalysed reaction is chloride(in) = chloride(out). Functionally, pi subunit of the heteropentameric ligand-gated chloride channel gated by gamma-aminobutyric acid (GABA). GABA-gated chloride channels, also named GABA(A) receptors (GABAAR), consist of five subunits arranged around a central pore and contain GABA active binding site(s) located at the alpha and beta subunit interfaces. When activated by GABA, GABAARs selectively allow the flow of chloride anions across the cell membrane down their electrochemical gradient. Pi-containing GABAARs are mostly located in peripheral tissues. In the uterus, pi subunits modulate uterus contraction by altering the sensitivity of GABAARs to pregnanolone. In the lungs, pi-containing GABAARs contribute to pulmonary fluid transport via luminal secretion of chloride. This chain is Gamma-aminobutyric acid receptor subunit pi, found in Mus musculus (Mouse).